Consider the following 208-residue polypeptide: Outer-membrane lipoprotein carrier protein (208 aa).

Residues 1-22 form the signal peptide; that stretch reads MRKTLTALMLSLPLLTPHMAFA.

This sequence belongs to the LolA family. Monomer.

It localises to the periplasm. In terms of biological role, participates in the translocation of lipoproteins from the inner membrane to the outer membrane. Only forms a complex with a lipoprotein if the residue after the N-terminal Cys is not an aspartate (The Asp acts as a targeting signal to indicate that the lipoprotein should stay in the inner membrane). In Shewanella woodyi (strain ATCC 51908 / MS32), this protein is Outer-membrane lipoprotein carrier protein.